The following is a 213-amino-acid chain: ATP phosphoribosyltransferase (213 aa).

It belongs to the ATP phosphoribosyltransferase family. Short subfamily. Heteromultimer composed of HisG and HisZ subunits.

It is found in the cytoplasm. The enzyme catalyses 1-(5-phospho-beta-D-ribosyl)-ATP + diphosphate = 5-phospho-alpha-D-ribose 1-diphosphate + ATP. Its pathway is amino-acid biosynthesis; L-histidine biosynthesis; L-histidine from 5-phospho-alpha-D-ribose 1-diphosphate: step 1/9. Catalyzes the condensation of ATP and 5-phosphoribose 1-diphosphate to form N'-(5'-phosphoribosyl)-ATP (PR-ATP). Has a crucial role in the pathway because the rate of histidine biosynthesis seems to be controlled primarily by regulation of HisG enzymatic activity. This Synechococcus sp. (strain RCC307) protein is ATP phosphoribosyltransferase.